The following is a 785-amino-acid chain: MAAPVSEPTVARQKLLALLGQVQTYVFQIELLRRCDPHIGRGKLPQLKLNALQVRALRRRLRPGLEAQAGAFLTPLSVTLELLLEYAWREGERLLGSLETFATAGDVAAFFTETMGLARPCPYHQRVRLDTYGGTVHMELCFLHDVENFLKQLNYCHLITPSRGATAALERVREFMVGAVGSGLIVPPELSDPSHPCAVCFEELCVTANQGATIARRLADRICNHVTQQAQVRLDANELRRYLPHAAGLSDADRARALSVLDHALARTAGGDGQPHPSPENDSVRKEADALLEAHDVFQATTPGLYAISELRFWLASGDRAGQTTMDAFASNLTALARRELQQETAAVAVELALFGRRAEHFDRAFGSHLAALDMVDALIIGGQATSPDDQIEALIRACYDHHLTTPLLRRLVSPEQCDEEALRRVLARMGAGGAADAPKGGAGPDDDGDRVAVEEGARGLGAPGGGGEDEDRRRGPGGQGPETWGDIATQAAADVRERRRLYADRLTKRSLASLGRCVREQRGELEKMLRVSVHGEVLPATFAAVANGFAARARFCALTAGAGTVIDNRSAPGVFDAHRFMRASLLRHQVDPALLPSITHRFFELVNGPLFDHSTHSFAQPPNTALYYSVENVGLLPHLKEELARFIMGAGGSGADWAVSEFQRFYCFDGISGITPTQRAAWRYIRELIIATTLFASVYRCGELELRRPDCSRPTSEGRYRYPPGVYLTYDSDCPLVAIVESAPDGCIGPRSVVVYDRDVFSILYSVLQHLAPRLPDGGHDGPP.

The C3H1-type zinc finger occupies 197-225; that stretch reads CAVCFEELCVTANQGATIARRLADRICNH. Disordered regions lie at residues 433 to 452 and 457 to 489; these read GGAA…GDRV and GARG…GDIA. Residue 696-703 participates in ATP binding; it reads FASVYRCG.

The protein belongs to the herpesviridae TRM1 protein family. As to quaternary structure, associates with TRM2 and TRM3 to form the tripartite terminase complex. Interacts with portal protein.

It localises to the host nucleus. Functionally, component of the molecular motor that translocates viral genomic DNA in empty capsid during DNA packaging. Forms a tripartite terminase complex together with TRM2 and TRM3 in the host cytoplasm. Once the complex reaches the host nucleus, it interacts with the capsid portal vertex. This portal forms a ring in which genomic DNA is translocated into the capsid. TRM1 carries an endonuclease activity that plays an important role for the cleavage of concatemeric viral DNA into unit length genomes. This is Tripartite terminase subunit 1 from Human herpesvirus 1 (strain 17) (HHV-1).